The following is a 279-amino-acid chain: Shikimate dehydrogenase (NADP(+)) (279 aa).

Residues 18-20 (SRS) and Thr64 contribute to the shikimate site. Lys68 acts as the Proton acceptor in catalysis. Residue Glu80 coordinates NADP(+). 2 residues coordinate shikimate: Asn89 and Asp104. Residues 129-133 (GAGGA), 153-158 (NRTVSR), and Ile218 contribute to the NADP(+) site. Tyr220 lines the shikimate pocket. Position 241 (Gly241) interacts with NADP(+).

This sequence belongs to the shikimate dehydrogenase family. As to quaternary structure, homodimer.

It catalyses the reaction shikimate + NADP(+) = 3-dehydroshikimate + NADPH + H(+). It functions in the pathway metabolic intermediate biosynthesis; chorismate biosynthesis; chorismate from D-erythrose 4-phosphate and phosphoenolpyruvate: step 4/7. Its function is as follows. Involved in the biosynthesis of the chorismate, which leads to the biosynthesis of aromatic amino acids. Catalyzes the reversible NADPH linked reduction of 3-dehydroshikimate (DHSA) to yield shikimate (SA). In Chelativorans sp. (strain BNC1), this protein is Shikimate dehydrogenase (NADP(+)).